The following is a 512-amino-acid chain: 2-isopropylmalate synthase (512 aa).

The 263-residue stretch at 4–266 folds into the Pyruvate carboxyltransferase domain; the sequence is IQFFDTTLRD…ETNIVLNQFK (263 aa). Mn(2+) is bound by residues aspartate 13, histidine 201, histidine 203, and asparagine 237. Residues 390–512 form a regulatory domain region; the sequence is ELKHLQVQYV…TKQVDFEEVK (123 aa).

Belongs to the alpha-IPM synthase/homocitrate synthase family. LeuA type 1 subfamily. Homodimer. Requires Mn(2+) as cofactor.

Its subcellular location is the cytoplasm. The enzyme catalyses 3-methyl-2-oxobutanoate + acetyl-CoA + H2O = (2S)-2-isopropylmalate + CoA + H(+). It participates in amino-acid biosynthesis; L-leucine biosynthesis; L-leucine from 3-methyl-2-oxobutanoate: step 1/4. Functionally, catalyzes the condensation of the acetyl group of acetyl-CoA with 3-methyl-2-oxobutanoate (2-ketoisovalerate) to form 3-carboxy-3-hydroxy-4-methylpentanoate (2-isopropylmalate). The protein is 2-isopropylmalate synthase of Listeria welshimeri serovar 6b (strain ATCC 35897 / DSM 20650 / CCUG 15529 / CIP 8149 / NCTC 11857 / SLCC 5334 / V8).